Consider the following 668-residue polypeptide: Macrolide export ATP-binding/permease protein MacB 1/2 (668 aa).

An ABC transporter domain is found at 9-247; the sequence is IRLRGVGREY…PGPGPAQAPQ (239 aa). Position 45–52 (45–52) interacts with ATP; that stretch reads GASGSGKS. The segment at 230–257 is disordered; it reads RTGAPAADPGPGPAQAPQPAPQPAPVQA. Pro residues predominate over residues 237–255; the sequence is DPGPGPAQAPQPAPQPAPV. The next 4 helical transmembrane spans lie at 294–314, 541–561, 598–618, and 634–654; these read FLTM…VALG, LALL…IGVM, LVCV…GLAF, and MLAA…LPAV.

Belongs to the ABC transporter superfamily. Macrolide exporter (TC 3.A.1.122) family. Homodimer.

The protein resides in the cell inner membrane. Functionally, non-canonical ABC transporter that contains transmembrane domains (TMD), which form a pore in the inner membrane, and an ATP-binding domain (NBD), which is responsible for energy generation. Confers resistance against macrolides. The polypeptide is Macrolide export ATP-binding/permease protein MacB 1/2 (Paracoccus denitrificans (strain Pd 1222)).